Reading from the N-terminus, the 602-residue chain is Cholinesterase (602 aa).

A signal peptide spans 1–28 (MQSRSTVIYIRFVLWFLLLWVLFEKSHT). N-linked (GlcNAc...) asparagine glycosylation is found at Asn-85 and Asn-134. 144-145 (GS) provides a ligand contact to substrate. Catalysis depends on Ser-226, which acts as the Acyl-ester intermediate. Ser-226 carries the phosphoserine modification. Residues Asn-269 and Asn-284 are each glycosylated (N-linked (GlcNAc...) asparagine). Glu-353 acts as the Charge relay system in catalysis. An N-linked (GlcNAc...) asparagine glycan is attached at Asn-369. His-466 functions as the Charge relay system in the catalytic mechanism. 4 N-linked (GlcNAc...) asparagine glycosylation sites follow: Asn-483, Asn-509, Asn-513, and Asn-514.

It belongs to the type-B carboxylesterase/lipase family. In terms of assembly, homotetramer; disulfide-linked. Dimer of dimers. As to expression, present in most cells except erythrocytes.

It localises to the secreted. It catalyses the reaction an acylcholine + H2O = a carboxylate + choline + H(+). In terms of biological role, esterase with broad substrate specificity. Contributes to the inactivation of the neurotransmitter acetylcholine. Can degrade neurotoxic organophosphate esters. The sequence is that of Cholinesterase (BCHE) from Bos taurus (Bovine).